Consider the following 375-residue polypeptide: Decapping and exoribonuclease protein Rai1 (375 aa).

Substrate contacts are provided by residues R43 and 120 to 122; that span reads LRG. The Mg(2+) site is built by E180, E222, D224, E247, and L248. Residue E222 coordinates substrate. Substrate contacts are provided by K249 and Q274.

This sequence belongs to the DXO/Dom3Z family. Interacts with Rat1. Mg(2+) is required as a cofactor.

The enzyme catalyses a 5'-end triphospho-ribonucleoside in mRNA + H2O = a 5'-end phospho-ribonucleoside in mRNA + diphosphate + H(+). It carries out the reaction a 5'-end NAD(+)-phospho-ribonucleoside in mRNA + H2O = a 5'-end phospho-ribonucleoside in mRNA + NAD(+) + H(+). It catalyses the reaction a 5'-end (N(7)-methyl 5'-triphosphoguanosine)-ribonucleoside-ribonucleotide in mRNA + H2O = a (N(7)-methyl 5'-triphosphoguanosine)-nucleoside + a 5'-end phospho-ribonucleoside in mRNA + H(+). In terms of biological role, decapping enzyme for NAD-capped RNAs: specifically hydrolyzes the nicotinamide adenine dinucleotide (NAD) cap from a subset of RNAs by removing the entire NAD moiety from the 5'-end of an NAD-capped RNA. The NAD-cap is present at the 5'-end of some RNAs and snoRNAs. In contrast to the canonical 5'-end N7 methylguanosine (m7G) cap, the NAD cap promotes mRNA decay. Also acts as a non-canonical decapping enzyme that removes the entire cap structure of m7G capped or incompletely capped RNAs and mediates their subsequent degradation. Specifically degrades pre-mRNAs with a defective 5'-end m7G cap and is part of a pre-mRNA capping quality control. Possesses 5'-pyrophosphohydrolase activity, hydrolyzing the 5'-end triphosphate to release pyrophosphates, and 5'-3' exonuclease activity. May be involved in RNA degradation in the nucleus. This is Decapping and exoribonuclease protein Rai1 from Drosophila melanogaster (Fruit fly).